The primary structure comprises 1360 residues: DNA-directed RNA polymerase subunit beta (1360 aa).

The protein belongs to the RNA polymerase beta chain family. As to quaternary structure, the RNAP catalytic core consists of 2 alpha, 1 beta, 1 beta' and 1 omega subunit. When a sigma factor is associated with the core the holoenzyme is formed, which can initiate transcription.

It catalyses the reaction RNA(n) + a ribonucleoside 5'-triphosphate = RNA(n+1) + diphosphate. DNA-dependent RNA polymerase catalyzes the transcription of DNA into RNA using the four ribonucleoside triphosphates as substrates. The protein is DNA-directed RNA polymerase subunit beta of Vesicomyosocius okutanii subsp. Calyptogena okutanii (strain HA).